The following is a 379-amino-acid chain: Deoxyhypusine synthase (379 aa).

NAD(+) contacts are provided by residues 104–108 (SNLVS), 130–132 (TAG), glutamate 136, and aspartate 237. 135 to 136 (EE) is a spermidine binding site. Position 242 (aspartate 242) interacts with spermidine. Residue glycine 293 participates in NAD(+) binding. Residue histidine 298 participates in spermidine binding. NAD(+) is bound at residue 318-319 (TA). Spermidine is bound by residues 324–326 (GSD) and 333–339 (EAVSWGK). Lysine 339 serves as the catalytic Nucleophile. 352 to 353 (DA) provides a ligand contact to NAD(+).

It belongs to the deoxyhypusine synthase family. In terms of assembly, homotetramer. NAD(+) serves as cofactor.

The enzyme catalyses [eIF5A protein]-L-lysine + spermidine = [eIF5A protein]-deoxyhypusine + propane-1,3-diamine. Its pathway is protein modification; eIF5A hypusination. In terms of biological role, catalyzes the NAD-dependent oxidative cleavage of spermidine and the subsequent transfer of the butylamine moiety of spermidine to the epsilon-amino group of a specific lysine residue of the eIF-5A precursor protein to form the intermediate deoxyhypusine residue. Also able to produce homospermidine from putrescine. The protein is Deoxyhypusine synthase (DHS1) of Nicotiana tabacum (Common tobacco).